A 762-amino-acid polypeptide reads, in one-letter code: 5-methyltetrahydropteroyltriglutamate--homocysteine methyltransferase (762 aa).

5-methyltetrahydropteroyltri-L-glutamate is bound by residues 16-19 (RELK) and K118. L-homocysteine contacts are provided by residues 439-441 (IGS) and E492. Residues 439 to 441 (IGS) and E492 each bind L-methionine. 5-methyltetrahydropteroyltri-L-glutamate contacts are provided by residues 523–524 (RC) and W569. D607 contributes to the L-homocysteine binding site. D607 contributes to the L-methionine binding site. Residue E613 coordinates 5-methyltetrahydropteroyltri-L-glutamate. Zn(2+) is bound by residues H649, C651, and E673. Catalysis depends on H702, which acts as the Proton donor. C734 provides a ligand contact to Zn(2+).

It belongs to the vitamin-B12 independent methionine synthase family. Zn(2+) serves as cofactor.

The enzyme catalyses 5-methyltetrahydropteroyltri-L-glutamate + L-homocysteine = tetrahydropteroyltri-L-glutamate + L-methionine. It functions in the pathway amino-acid biosynthesis; L-methionine biosynthesis via de novo pathway; L-methionine from L-homocysteine (MetE route): step 1/1. Functionally, catalyzes the transfer of a methyl group from 5-methyltetrahydrofolate to homocysteine resulting in methionine formation. The polypeptide is 5-methyltetrahydropteroyltriglutamate--homocysteine methyltransferase (Pseudomonas entomophila (strain L48)).